Consider the following 196-residue polypeptide: MAASMTKPISITSLGFYSDRKNIAFSDCISICSGFRHSRPSCLDLVTKSPSNNSRVLPVVSAQISSDYIPDSKFYKVEAIVRPWRIQQVSSALLKIGIRGVTVSDVRGFGAQGGSTERHGGSEFSEDKFVAKVKMEIVVKKDQVESVINTIIEGARTGEIGDGKIFVLPVSDVIRVRTGERGEKAEKMTGDMLSPS.

A chloroplast-targeting transit peptide spans 1–61 (MAASMTKPIS…NNSRVLPVVS (61 aa)). ATP-binding positions include 108 to 112 (GFGAQ) and 161 to 164 (GDGK). Glycine 110 is a Mg(2+) binding site.

Belongs to the P(II) protein family. Homodimer. Interacts with NAGK. Interaction with NAGK is dependent of MgATP and inhibited by 2-oxoglutarate, arginine, glutamate, citrate, and oxaloacetate.

The protein resides in the plastid. It is found in the chloroplast. Its function is as follows. Participates in sensing carbon and organic nitrogen status and regulates some steps of primary carbon and nitrogen metabolism. Required for nitrite uptake in chloroplasts and regulates arginine biosynthesis through interaction with acetylglutamate kinase (NAGK) in chloroplasts. Regulates fatty acids synthesis in chloroplasts by interacting with the acetyl-CoA carboxylase complex and inhibiting acetyl-CoA carboxylase (ACCase) activity. The sequence is that of Nitrogen regulatory protein P-II homolog (GLB1) from Arabidopsis thaliana (Mouse-ear cress).